The following is a 258-amino-acid chain: MLAKRIIPCLDVRDGQVVKGVQFRNHEIIGDIVPLAKRYAEEGADELVFYDITASSDGRVVDKSWVSRVAEVIDIPFCVAGGIKSLEDAAKILSFGADKISINSPALADPTLITRLADRFGVQCIVVGIDTWYDAETGKYHVNQYTGDESRTRVTQWETLDWVQEVQKRGAGEIVLNMMNQDGVRNGYDLEQLKKVREVCHIPLIASGGAGTMEHFLEAFRDADVDGALAASVFHKQIINIGELKAYLATQGVEIRIC.

Active-site residues include D11 and D130.

It belongs to the HisA/HisF family. In terms of assembly, heterodimer of HisH and HisF.

The protein resides in the cytoplasm. The enzyme catalyses 5-[(5-phospho-1-deoxy-D-ribulos-1-ylimino)methylamino]-1-(5-phospho-beta-D-ribosyl)imidazole-4-carboxamide + L-glutamine = D-erythro-1-(imidazol-4-yl)glycerol 3-phosphate + 5-amino-1-(5-phospho-beta-D-ribosyl)imidazole-4-carboxamide + L-glutamate + H(+). Its pathway is amino-acid biosynthesis; L-histidine biosynthesis; L-histidine from 5-phospho-alpha-D-ribose 1-diphosphate: step 5/9. Functionally, IGPS catalyzes the conversion of PRFAR and glutamine to IGP, AICAR and glutamate. The HisF subunit catalyzes the cyclization activity that produces IGP and AICAR from PRFAR using the ammonia provided by the HisH subunit. This Shigella dysenteriae serotype 1 (strain Sd197) protein is Imidazole glycerol phosphate synthase subunit HisF.